We begin with the raw amino-acid sequence, 207 residues long: Dephospho-CoA kinase (207 aa).

Residues 1–11 (MTRSPAPSSPT) are compositionally biased toward polar residues. Residues 1 to 21 (MTRSPAPSSPTHPRRLGLTGS) are disordered. The 193-residue stretch at 15–207 (RLGLTGSIGA…DAALRQLEIT (193 aa)) folds into the DPCK domain. 23–28 (GAGKST) is an ATP binding site.

Belongs to the CoaE family.

Its subcellular location is the cytoplasm. It catalyses the reaction 3'-dephospho-CoA + ATP = ADP + CoA + H(+). The protein operates within cofactor biosynthesis; coenzyme A biosynthesis; CoA from (R)-pantothenate: step 5/5. Catalyzes the phosphorylation of the 3'-hydroxyl group of dephosphocoenzyme A to form coenzyme A. In Deinococcus radiodurans (strain ATCC 13939 / DSM 20539 / JCM 16871 / CCUG 27074 / LMG 4051 / NBRC 15346 / NCIMB 9279 / VKM B-1422 / R1), this protein is Dephospho-CoA kinase.